A 163-amino-acid chain; its full sequence is Phosphopantetheine adenylyltransferase (163 aa).

Serine 9 provides a ligand contact to substrate. ATP-binding positions include 9–10 (SF) and histidine 17. Substrate is bound by residues lysine 41, threonine 73, and arginine 87. Residues 88-90 (GLR), glutamate 98, and 123-129 (YAYFSSS) each bind ATP.

It belongs to the bacterial CoaD family. As to quaternary structure, homohexamer. Mg(2+) serves as cofactor.

The protein resides in the cytoplasm. The enzyme catalyses (R)-4'-phosphopantetheine + ATP + H(+) = 3'-dephospho-CoA + diphosphate. The protein operates within cofactor biosynthesis; coenzyme A biosynthesis; CoA from (R)-pantothenate: step 4/5. Its function is as follows. Reversibly transfers an adenylyl group from ATP to 4'-phosphopantetheine, yielding dephospho-CoA (dPCoA) and pyrophosphate. This Lactiplantibacillus plantarum (strain ATCC BAA-793 / NCIMB 8826 / WCFS1) (Lactobacillus plantarum) protein is Phosphopantetheine adenylyltransferase.